A 574-amino-acid polypeptide reads, in one-letter code: Mitochondrial distribution and morphology protein 34 (574 aa).

Residues 1 to 195 (MAFNFNWSPL…LPAIIHRLSL (195 aa)) enclose the SMP-LTD domain. 3 disordered regions span residues 210 to 233 (RESP…KDPV), 301 to 403 (EGAA…TPPT), and 479 to 515 (SADG…ESNA). Composition is skewed to low complexity over residues 212-224 (SPAA…GEDP), 302-314 (GAAS…GSPV), and 323-334 (SSPLSSLQDASS). Over residues 335–345 (VLSLQNRSTTP) the composition is skewed to polar residues. The span at 346-359 (GSSFSGYGLSLGAG) shows a compositional bias: low complexity. Positions 360–373 (RHSKTRPTRKRKKR) are enriched in basic residues. The span at 374–385 (VVDLRKHNKPAD) shows a compositional bias: basic and acidic residues. Positions 393-403 (STFTESTTPPT) are enriched in low complexity. Residues 484-493 (KTSSQQQPIS) show a composition bias toward polar residues.

It belongs to the MDM34 family. In terms of assembly, component of the ER-mitochondria encounter structure (ERMES) or MDM complex, composed of MMM1, MDM10, MDM12 and MDM34.

The protein localises to the mitochondrion outer membrane. Functionally, component of the ERMES/MDM complex, which serves as a molecular tether to connect the endoplasmic reticulum (ER) and mitochondria. Components of this complex are involved in the control of mitochondrial shape and protein biogenesis, and function in nonvesicular lipid trafficking between the ER and mitochondria. MDM34 is required for the interaction of the ER-resident membrane protein MMM1 and the outer mitochondrial membrane-resident beta-barrel protein MDM10. The chain is Mitochondrial distribution and morphology protein 34 from Coccidioides immitis (strain RS) (Valley fever fungus).